Reading from the N-terminus, the 1460-residue chain is Collagen alpha-1(I) chain (1460 aa).

A signal peptide spans Met1 to Gly22. Residues Gln23–Pro157 constitute a propeptide, N-terminal propeptide. The 59-residue stretch at Val34 to Pro92 folds into the VWFC domain. A disordered region spans residues Ala96–Arg1213. Residues Pro134–Pro149 are compositionally biased toward pro residues. Positions Gln158–Pro174 are nonhelical region (N-terminal). Lys166 is modified (allysine). Residue Ser167 is modified to Phosphoserine. Positions Gly175 to Pro1188 are triple-helical region. 4-hydroxyproline is present on residues Pro186, Pro189, Pro192, Pro201, Pro204, Pro207, Pro222, Pro237, Pro243, Pro252, and Pro258. Positions Pro194–Met213 are enriched in low complexity. The segment covering Asn225 to Glu239 has biased composition (basic and acidic residues). Lys261 carries the 5-hydroxylysine; alternate modification. An O-linked (Gal...) hydroxylysine; alternate glycan is attached at Lys261. Residue Ser267 is modified to Phosphoserine. Positions Asp275–Asn291 are enriched in low complexity. 5 positions are modified to 4-hydroxyproline: Pro285, Pro288, Pro294, Pro303, and Pro309. Low complexity predominate over residues Pro314–Ala327. A compositionally biased stretch (pro residues) spans Pro329–Phe341. 4-hydroxyproline is present on residues Pro330, Pro339, Pro342, Pro369, Pro372, Pro384, Pro390, Pro399, Pro405, Pro408, and Pro423. A compositionally biased stretch (low complexity) spans Ala375–Ser414. Residue Lys426 is modified to 5-hydroxylysine. Residues Pro432, Pro435, Pro447, Pro456, Pro471, Pro477, Pro486, and Pro492 each carry the 4-hydroxyproline modification. The segment covering Gly481–Gly490 has biased composition (gly residues). Lys501 is modified (5-hydroxylysine). Residues Pro510, Pro519, Pro525, Pro531, Pro540, Pro543, Pro552, Pro561, Pro567, Pro579, Pro588, Pro597, Pro600, Pro618, Pro636, Pro642, Pro648, Pro654, Pro660, Pro666, Pro678, Pro687, Pro699, Pro711, Pro714, Pro720, Pro726, and Pro735 each carry the 4-hydroxyproline modification. The segment covering Lys534–Arg560 has biased composition (low complexity). Residues Ala569 to Pro588 are compositionally biased toward low complexity. The span at Gln630–Gln657 shows a compositional bias: low complexity. Positions Pro692–Pro720 are enriched in low complexity. The Cell attachment site signature appears at Arg741–Asp743. Lys747 carries the 5-hydroxylysine modification. 3 positions are modified to 4-hydroxyproline: Pro753, Pro768, and Pro774. Over residues Ala780–Ala794 the composition is skewed to low complexity. Position 783 is a phosphoserine (Ser783). 8 positions are modified to 4-hydroxyproline: Pro795, Pro801, Pro804, Pro813, Pro819, Pro837, Pro846, and Pro855. Low complexity predominate over residues Ala807–Ala834. Residues Pro836–Pro848 are compositionally biased toward pro residues. Lys858 is subject to 5-hydroxylysine. Residues Ser863 to Val879 are compositionally biased toward low complexity. 4-hydroxyproline is present on residues Pro867 and Pro873. Pro881 is subject to 3-hydroxyproline. 4-hydroxyproline occurs at positions 882, 891, 894, 915, 924, 933, 942, 960, 969, 972, 978, 993, 999, 1005, 1014, and 1020. Over residues Glu908 to Glu917 the composition is skewed to low complexity. Positions Ala927–Ala951 are enriched in low complexity. A compositionally biased stretch (pro residues) spans Pro992–Ala1002. The segment covering Pro1004–Ser1019 has biased composition (low complexity). Residue Lys1029 is modified to 5-hydroxylysine. Pro residues predominate over residues Ala1038–Val1053. A 4-hydroxyproline mark is found at Pro1041, Pro1044, and Pro1047. The segment covering Ile1074–Pro1088 has biased composition (low complexity). The Cell attachment site motif lies at Arg1089–Asp1091. Basic and acidic residues predominate over residues Arg1089–Ile1103. Position 1092 is a 5-hydroxylysine (Lys1092). Lys1104 is subject to 5-hydroxylysine; alternate. Lys1104 is a glycosylation site (O-linked (Gal...) hydroxylysine; alternate). Residues Pro1116, Pro1119, Pro1122, Pro1140, and Pro1155 each carry the 4-hydroxyproline modification. The segment covering Pro1122–Pro1155 has biased composition (low complexity). Residue Pro1160 is modified to 3-hydroxyproline. Pro1161 is subject to 4-hydroxyproline. The span at Val1173–Pro1188 shows a compositional bias: pro residues. Pro1175 is modified (3-hydroxyproline). Pro1176 bears the 4-hydroxyproline mark. Pro1178 carries the 3-hydroxyproline modification. A 4-hydroxyproline modification is found at Pro1179. At Pro1181 the chain carries 3-hydroxyproline. 3 positions are modified to 4-hydroxyproline: Pro1182, Pro1185, and Pro1188. The tract at residues Ser1189 to Ala1214 is nonhelical region (C-terminal). Basic and acidic residues predominate over residues Glu1203 to Arg1213. Lys1204 carries the post-translational modification Allysine. The propeptide at Asp1215–Leu1460 is C-terminal propeptide. The Fibrillar collagen NC1 domain occupies Leu1225–Leu1460. Intrachain disulfides connect Cys1255/Cys1287, Cys1295/Cys1458, and Cys1366/Cys1411. Ca(2+)-binding residues include Asp1273, Asn1275, Gln1276, Cys1278, and Asp1281. Asn1361 carries an N-linked (GlcNAc...) asparagine glycan.

It belongs to the fibrillar collagen family. In terms of assembly, trimers of one alpha 2(I) and two alpha 1(I) chains. Interacts with MRC2. Interacts with TRAM2. Interacts with MFAP4 in a Ca (2+)-dependent manner. Post-translationally, contains mostly 4-hydroxyproline. Proline residues at the third position of the tripeptide repeating unit (G-X-Y) are hydroxylated in some or all of the chains. Contains 3-hydroxyproline at a few sites. This modification occurs on the first proline residue in the sequence motif Gly-Pro-Hyp, where Hyp is 4-hydroxyproline. In terms of processing, lysine residues at the third position of the tripeptide repeating unit (G-X-Y) are 5-hydroxylated in some or all of the chains. Post-translationally, O-glycosylated on hydroxylated lysine residues. The O-linked glycan consists of a Glc-Gal disaccharide.

Its subcellular location is the secreted. The protein resides in the extracellular space. It localises to the extracellular matrix. Type I collagen is a member of group I collagen (fibrillar forming collagen). The sequence is that of Collagen alpha-1(I) chain (COL1A1) from Canis lupus familiaris (Dog).